The chain runs to 160 residues: MKLRIGHGFDVHKFGGDKPLILGGVTVPYDTGLIAHSDGDVVLHAISDAILGAMALGDIGKHFPDTDDAFSGADSRVLLRHCYQLALNKHFQLGNLDVTVIAQAPKMAPHIEAIRQLLALDLNTDIDNINVKATTTEKLGFTGRKEGIAVEAVVLMQQAI.

2 residues coordinate a divalent metal cation: aspartate 10 and histidine 12. Residues 10 to 12 and 36 to 37 contribute to the 4-CDP-2-C-methyl-D-erythritol 2-phosphate site; these read DVH and HS. Histidine 44 is an a divalent metal cation binding site. 4-CDP-2-C-methyl-D-erythritol 2-phosphate contacts are provided by residues 58 to 60, 63 to 67, 102 to 108, 134 to 137, phenylalanine 141, and arginine 144; these read DIG, FPDTD, AQAPKMA, and TTTE.

The protein belongs to the IspF family. Homotrimer. Requires a divalent metal cation as cofactor.

The enzyme catalyses 4-CDP-2-C-methyl-D-erythritol 2-phosphate = 2-C-methyl-D-erythritol 2,4-cyclic diphosphate + CMP. It functions in the pathway isoprenoid biosynthesis; isopentenyl diphosphate biosynthesis via DXP pathway; isopentenyl diphosphate from 1-deoxy-D-xylulose 5-phosphate: step 4/6. Its function is as follows. Involved in the biosynthesis of isopentenyl diphosphate (IPP) and dimethylallyl diphosphate (DMAPP), two major building blocks of isoprenoid compounds. Catalyzes the conversion of 4-diphosphocytidyl-2-C-methyl-D-erythritol 2-phosphate (CDP-ME2P) to 2-C-methyl-D-erythritol 2,4-cyclodiphosphate (ME-CPP) with a corresponding release of cytidine 5-monophosphate (CMP). The protein is 2-C-methyl-D-erythritol 2,4-cyclodiphosphate synthase of Shewanella denitrificans (strain OS217 / ATCC BAA-1090 / DSM 15013).